The sequence spans 351 residues: Prostaglandin reductase 2 (351 aa).

99–100 serves as a coordination point for substrate; sequence FY. Residues 165 to 168, lysine 192, tyrosine 208, asparagine 231, 253 to 259, 287 to 289, and asparagine 337 contribute to the NADP(+) site; these read GACG, CGQISQY, and FMV. Substrate is bound at residue 288-290; sequence MVL.

This sequence belongs to the NADP-dependent oxidoreductase L4BD family. As to quaternary structure, monomer.

It is found in the cytoplasm. It carries out the reaction 13,14-dihydro-15-oxo-prostaglandin E2 + NAD(+) = 15-oxoprostaglandin E2 + NADH + H(+). It catalyses the reaction 13,14-dihydro-15-oxo-prostaglandin E2 + NADP(+) = 15-oxoprostaglandin E2 + NADPH + H(+). The enzyme catalyses 13,14-dihydro-15-oxo-PGF2alpha + NADP(+) = 15-oxoprostaglandin F2alpha + NADPH + H(+). The catalysed reaction is 13,14-dihydro-15-oxo-prostaglandin E1 + NADP(+) = 15-oxoprostaglandin E1 + NADPH + H(+). It carries out the reaction 13,14-dihydro-15-oxo-prostaglandin F1alpha + NADP(+) = 15-oxoprostaglandin F1alpha + NADPH + H(+). Its function is as follows. Functions as 15-oxo-prostaglandin 13-reductase and acts on 15-keto-PGE1, 15-keto-PGE2, 15-keto-PGE1-alpha and 15-keto-PGE2-alpha with highest activity towards 15-keto-PGE2. Overexpression represses transcriptional activity of PPARG and inhibits adipocyte differentiation. This Rattus norvegicus (Rat) protein is Prostaglandin reductase 2.